Consider the following 506-residue polypeptide: 2-isopropylmalate synthase (506 aa).

Residues 4–266 (ILFMDTTLRD…EPSMTLKEIK (263 aa)) form the Pyruvate carboxyltransferase domain. Mn(2+)-binding residues include D13, H201, H203, and N237. Residues 390–506 (NITQLQVHFV…KLKSFIQLVK (117 aa)) are regulatory domain.

Belongs to the alpha-IPM synthase/homocitrate synthase family. LeuA type 1 subfamily. In terms of assembly, homodimer. Mn(2+) serves as cofactor.

It is found in the cytoplasm. It catalyses the reaction 3-methyl-2-oxobutanoate + acetyl-CoA + H2O = (2S)-2-isopropylmalate + CoA + H(+). The protein operates within amino-acid biosynthesis; L-leucine biosynthesis; L-leucine from 3-methyl-2-oxobutanoate: step 1/4. Its function is as follows. Catalyzes the condensation of the acetyl group of acetyl-CoA with 3-methyl-2-oxobutanoate (2-ketoisovalerate) to form 3-carboxy-3-hydroxy-4-methylpentanoate (2-isopropylmalate). The polypeptide is 2-isopropylmalate synthase (Bacillus cereus (strain 03BB102)).